The following is a 217-amino-acid chain: Coiled-coil domain-containing protein 124-B (217 aa).

Residues 1–123 form a disordered region; it reads MPKKFQSENT…EKPKTHLEIP (123 aa). Basic and acidic residues-rich tracts occupy residues 18–45, 52–74, and 98–123; these read RKAE…DDKH, RKEE…QRLL, and QIEE…LEIP. The stretch at 41 to 83 forms a coiled coil; that stretch reads DDDKHVVRKEHRKEEKEKKRLELLERKKESQRLLDEEDSKMKG.

Belongs to the CCDC124 family. Associates with translationally inactive ribosomes in the nonrotated state.

The protein localises to the cytoplasm. The protein resides in the cytoskeleton. Its subcellular location is the microtubule organizing center. It is found in the centrosome. It localises to the midbody. Functionally, ribosome-binding protein involved in ribosome hibernation: associates with translationally inactive ribosomes and stabilizes the nonrotated conformation of the 80S ribosome, thereby promoting ribosome preservation and storage. The polypeptide is Coiled-coil domain-containing protein 124-B (ccdc124-b) (Xenopus laevis (African clawed frog)).